We begin with the raw amino-acid sequence, 203 residues long: Probable GTP-binding protein EngB (203 aa).

The 190-residue stretch at 1–190 folds into the EngB-type G domain; the sequence is MPEIVLVGRS…LEALQERVRK (190 aa). GTP is bound by residues 8–15, 35–39, 53–56, 132–135, and 169–171; these read GRSNVGKS, GVTRK, DMPG, NKID, and ISA. Mg(2+) is bound by residues Ser-15 and Thr-37.

This sequence belongs to the TRAFAC class TrmE-Era-EngA-EngB-Septin-like GTPase superfamily. EngB GTPase family. Mg(2+) is required as a cofactor.

Functionally, necessary for normal cell division and for the maintenance of normal septation. The sequence is that of Probable GTP-binding protein EngB from Methanopyrus kandleri (strain AV19 / DSM 6324 / JCM 9639 / NBRC 100938).